The sequence spans 619 residues: Chaperone protein DnaK (619 aa).

At T175 the chain carries Phosphothreonine; by autocatalysis. The tract at residues 578–619 (NGGAQGQGFDPNNMGGANAGAGATNNNDDNVVDADFEVQDDK) is disordered. Over residues 589–606 (NNMGGANAGAGATNNNDD) the composition is skewed to low complexity. Over residues 607–619 (NVVDADFEVQDDK) the composition is skewed to acidic residues.

It belongs to the heat shock protein 70 family.

Its function is as follows. Acts as a chaperone. The sequence is that of Chaperone protein DnaK from Clostridium perfringens (strain ATCC 13124 / DSM 756 / JCM 1290 / NCIMB 6125 / NCTC 8237 / Type A).